We begin with the raw amino-acid sequence, 407 residues long: Methylthioribose kinase (407 aa).

Residues asparagine 40, lysine 57, and glutamate 111–leucine 113 contribute to the ATP site. Substrate is bound at residue aspartate 229. Aspartate 246 to glutamate 248 lines the ATP pocket. Residue arginine 344 coordinates substrate.

This sequence belongs to the methylthioribose kinase family. As to quaternary structure, homodimer.

It catalyses the reaction 5-(methylsulfanyl)-D-ribose + ATP = 5-(methylsulfanyl)-alpha-D-ribose 1-phosphate + ADP + H(+). It participates in amino-acid biosynthesis; L-methionine biosynthesis via salvage pathway; S-methyl-5-thio-alpha-D-ribose 1-phosphate from S-methyl-5'-thioadenosine (hydrolase route): step 2/2. Its function is as follows. Catalyzes the phosphorylation of methylthioribose into methylthioribose-1-phosphate. This is Methylthioribose kinase from Yersinia pestis bv. Antiqua (strain Angola).